We begin with the raw amino-acid sequence, 256 residues long: tRNA-cytidine(32) 2-sulfurtransferase (256 aa).

A PP-loop motif motif is present at residues 35–40; that stretch reads SGGKDS. Residues C110, C113, and C201 each contribute to the [4Fe-4S] cluster site.

Belongs to the TtcA family. As to quaternary structure, homodimer. The cofactor is Mg(2+). [4Fe-4S] cluster serves as cofactor.

The protein localises to the cytoplasm. It catalyses the reaction cytidine(32) in tRNA + S-sulfanyl-L-cysteinyl-[cysteine desulfurase] + AH2 + ATP = 2-thiocytidine(32) in tRNA + L-cysteinyl-[cysteine desulfurase] + A + AMP + diphosphate + H(+). Its pathway is tRNA modification. Its function is as follows. Catalyzes the ATP-dependent 2-thiolation of cytidine in position 32 of tRNA, to form 2-thiocytidine (s(2)C32). The sulfur atoms are provided by the cysteine/cysteine desulfurase (IscS) system. The protein is tRNA-cytidine(32) 2-sulfurtransferase of Coxiella burnetii (strain RSA 331 / Henzerling II).